The chain runs to 200 residues: Rubrerythrin (200 aa).

In terms of domain architecture, Ferritin-like diiron spans 12 to 155 (SIKGSKTEKH…ALLAHVEDGS (144 aa)). Positions 29, 62, 103, 106, 137, 140, 167, 170, 183, and 186 each coordinate Fe(3+). One can recognise a Rubredoxin-like domain in the interval 162-200 (EIAWQCRNCGYVITSKKAPKLCPACAHPQAYFEPMKTNY).

In terms of assembly, homodimer. Possesses two rubredoxin-like centers and two non-sulfur oxo-bridged di-iron centers per dimer. The cofactor is Fe(3+).

It is found in the cytoplasm. In terms of biological role, may provide oxidative stress protection via catalytic reduction of intracellular hydrogen peroxide. The protein is Rubrerythrin (rbr) of Porphyromonas gingivalis (strain ATCC BAA-308 / W83).